We begin with the raw amino-acid sequence, 257 residues long: UPF0246 protein Sbal223_3241 (257 aa).

This sequence belongs to the UPF0246 family.

This Shewanella baltica (strain OS223) protein is UPF0246 protein Sbal223_3241.